We begin with the raw amino-acid sequence, 420 residues long: D-tagatose-1,6-bisphosphate aldolase subunit GatZ (420 aa).

Belongs to the GatZ/KbaZ family. GatZ subfamily. In terms of assembly, forms a complex with GatY.

The protein operates within carbohydrate metabolism; D-tagatose 6-phosphate degradation; D-glyceraldehyde 3-phosphate and glycerone phosphate from D-tagatose 6-phosphate: step 2/2. Component of the tagatose-1,6-bisphosphate aldolase GatYZ that is required for full activity and stability of the Y subunit. Could have a chaperone-like function for the proper and stable folding of GatY. When expressed alone, GatZ does not show any aldolase activity. Is involved in the catabolism of galactitol. In Escherichia coli O139:H28 (strain E24377A / ETEC), this protein is D-tagatose-1,6-bisphosphate aldolase subunit GatZ.